We begin with the raw amino-acid sequence, 475 residues long: ATP synthase subunit beta, chloroplastic (475 aa).

ATP is bound at residue 155 to 162 (GGAGVGKT).

The protein belongs to the ATPase alpha/beta chains family. In terms of assembly, F-type ATPases have 2 components, CF(1) - the catalytic core - and CF(0) - the membrane proton channel. CF(1) has five subunits: alpha(3), beta(3), gamma(1), delta(1), epsilon(1). CF(0) has four main subunits: a(1), b(1), b'(1) and c(9-12).

It is found in the plastid. The protein resides in the chloroplast thylakoid membrane. It carries out the reaction ATP + H2O + 4 H(+)(in) = ADP + phosphate + 5 H(+)(out). Its function is as follows. Produces ATP from ADP in the presence of a proton gradient across the membrane. The catalytic sites are hosted primarily by the beta subunits. This Guillardia theta (Cryptophyte) protein is ATP synthase subunit beta, chloroplastic.